The chain runs to 124 residues: Large ribosomal subunit protein bL12 (124 aa).

It belongs to the bacterial ribosomal protein bL12 family. Homodimer. Part of the ribosomal stalk of the 50S ribosomal subunit. Forms a multimeric L10(L12)X complex, where L10 forms an elongated spine to which 2 to 4 L12 dimers bind in a sequential fashion. Binds GTP-bound translation factors.

In terms of biological role, forms part of the ribosomal stalk which helps the ribosome interact with GTP-bound translation factors. Is thus essential for accurate translation. This chain is Large ribosomal subunit protein bL12, found in Burkholderia mallei (strain NCTC 10247).